Reading from the N-terminus, the 284-residue chain is Ribosomal RNA small subunit methyltransferase A (284 aa).

Positions 12, 14, 47, 68, 93, and 118 each coordinate S-adenosyl-L-methionine.

It belongs to the class I-like SAM-binding methyltransferase superfamily. rRNA adenine N(6)-methyltransferase family. RsmA subfamily.

The protein resides in the cytoplasm. The catalysed reaction is adenosine(1518)/adenosine(1519) in 16S rRNA + 4 S-adenosyl-L-methionine = N(6)-dimethyladenosine(1518)/N(6)-dimethyladenosine(1519) in 16S rRNA + 4 S-adenosyl-L-homocysteine + 4 H(+). Functionally, specifically dimethylates two adjacent adenosines (A1518 and A1519) in the loop of a conserved hairpin near the 3'-end of 16S rRNA in the 30S particle. May play a critical role in biogenesis of 30S subunits. This Synechocystis sp. (strain ATCC 27184 / PCC 6803 / Kazusa) protein is Ribosomal RNA small subunit methyltransferase A.